The sequence spans 929 residues: Valine--tRNA ligase (929 aa).

The short motif at 59-69 (PNVTGSLHMGH) is the 'HIGH' region element. A 'KMSKS' region motif is present at residues 557-561 (KMSKS). ATP is bound at residue K560. Residues 862–929 (LVDLDALRGR…LARQRLSDLG (68 aa)) adopt a coiled-coil conformation.

The protein belongs to the class-I aminoacyl-tRNA synthetase family. ValS type 1 subfamily. In terms of assembly, monomer.

The protein resides in the cytoplasm. It carries out the reaction tRNA(Val) + L-valine + ATP = L-valyl-tRNA(Val) + AMP + diphosphate. Its function is as follows. Catalyzes the attachment of valine to tRNA(Val). As ValRS can inadvertently accommodate and process structurally similar amino acids such as threonine, to avoid such errors, it has a 'posttransfer' editing activity that hydrolyzes mischarged Thr-tRNA(Val) in a tRNA-dependent manner. The chain is Valine--tRNA ligase from Prochlorococcus marinus (strain MIT 9313).